The primary structure comprises 1277 residues: DNA repair protein RAD5B (1277 aa).

Residues 271-293 (KLEQENDDLFSSGDSDGTSAKRR) are disordered. A Helicase ATP-binding domain is found at 674–871 (PTATQMARGG…YSLLCFLHVE (198 aa)). ATP is bound at residue 687–694 (DAMGLGKT). The short motif at 822 to 825 (DEAH) is the DEAH box element. The segment at 1040-1080 (CPICLESADDPVLTPCAHRMCRECLLTSWRSPSCGLCPICR) adopts an RING-type zinc-finger fold. One can recognise a Helicase C-terminal domain in the interval 1113–1277 (ELLKCLEKIK…RLEELKMLFR (165 aa)).

The protein belongs to the SNF2/RAD54 helicase family. RAD16 subfamily.

Its subcellular location is the nucleus. Its function is as follows. Possesses intrinsic ATP-dependent nucleosome-remodeling activity. This activity may be required for DNA repair. Does not seem to be required for DNA repair and regulation of homologous recombination (HR). The polypeptide is DNA repair protein RAD5B (Arabidopsis thaliana (Mouse-ear cress)).